The primary structure comprises 535 residues: EH domain-containing protein 3 (535 aa).

Position 1 is an N-acetylmethionine (Met-1). The Dynamin-type G domain maps to 55–286; sequence FDNKPMVLLV…DLFRDIQSLP (232 aa). Positions 65–72 are G1 motif; sequence GQYSTGKT. 65–72 contacts ATP; that stretch reads GQYSTGKT. The G2 motif stretch occupies residues 91-92; the sequence is EP. Positions 153–156 are G3 motif; the sequence is DTPG. The stretch at 198–227 forms a coiled coil; it reads DEFSEVIKALKNHEDKMRVVLNKADQIETQ. The G4 motif stretch occupies residues 219-222; that stretch reads NKAD. Residue Lys-220 coordinates ATP. A region of interest (G5 motif) is located at residue Ile-243. Trp-258 serves as a coordination point for ATP. Lys-315 is covalently cross-linked (Glycyl lysine isopeptide (Lys-Gly) (interchain with G-Cter in SUMO)). Phosphoserine occurs at positions 349 and 456. Residues 444–532 enclose the EH domain; sequence DKPMYDEIFY…AHLLPPSKRK (89 aa). One can recognise an EF-hand domain in the interval 476 to 511; it reads LPNSVLGKIWKLADIDKDGMLDDEEFALANHLIKVK. Ca(2+)-binding residues include Asp-489, Asp-491, Asp-493, Met-495, and Glu-500. Residue Lys-511 forms a Glycyl lysine isopeptide (Lys-Gly) (interchain with G-Cter in SUMO) linkage.

It belongs to the TRAFAC class dynamin-like GTPase superfamily. Dynamin/Fzo/YdjA family. EHD subfamily. Homooligomer. Heterooligomer with EHD1. Heterooligomer with EHD2 and EHD4; ATP-binding is required for heterooligomerization. Interacts with PACSIN1. Interacts with PACSIN2. Interacts (via EH domain) with MICALL1. Interacts (via EH domain) with RAB11FIP2. Interacts with ANK2. Interacts with CACNA1GG and CACNA1H. As to expression, strong expression seen in the kidney, brain and liver. In the kidney, expressed exclusively by glomerular endothelial cells; at protein level. Expressed in skeletal muscle neuromuscular junction perisynaptic region; at protein level.

Its subcellular location is the recycling endosome membrane. It is found in the cell membrane. The protein localises to the cell projection. The protein resides in the cilium membrane. It localises to the cytoplasmic vesicle. Functionally, ATP- and membrane-binding protein that controls membrane reorganization/tubulation upon ATP hydrolysis. In vitro causes tubulation of endocytic membranes. Binding to phosphatidic acid induces its membrane tubulation activity. Plays a role in endocytic transport. Involved in early endosome to recycling endosome compartment (ERC), retrograde early endosome to Golgi, and endosome to plasma membrane (rapid recycling) protein transport. Involved in the regulation of Golgi maintenance and morphology. Involved in the recycling of internalized D1 dopamine receptor. Plays a role in cardiac protein trafficking probably implicating ANK2. Involved in the ventricular membrane targeting of SLC8A1 and CACNA1C and probably the atrial membrane localization of CACNA1GG and CACNA1H implicated in the regulation of atrial myocyte excitability and cardiac conduction. In conjunction with EHD4 may be involved in endocytic trafficking of KDR/VEGFR2 implicated in control of glomerular function. Involved in the rapid recycling of integrin beta-3 implicated in cell adhesion maintenance. Involved in the unidirectional retrograde dendritic transport of endocytosed BACE1 and in efficient sorting of BACE1 to axons implicating a function in neuronal APP processing. Plays a role in the formation of the ciliary vesicle, an early step in cilium biogenesis; possibly sharing redundant functions with Ehd1. In Mus musculus (Mouse), this protein is EH domain-containing protein 3.